The sequence spans 148 residues: Lysozyme C-1 (148 aa).

The first 18 residues, 1 to 18 (MKALLTLGLLLLSVTAQA), serve as a signal peptide directing secretion. A C-type lysozyme domain is found at 19–148 (KVYNRCELAR…LSQYIRNCGV (130 aa)). Disulfide bonds link C24–C146, C48–C134, C83–C99, and C95–C113. Residues E53 and D71 contribute to the active site.

It belongs to the glycosyl hydrolase 22 family. As to quaternary structure, monomer. As to expression, expressed strongly only in small intestine.

It is found in the secreted. It catalyses the reaction Hydrolysis of (1-&gt;4)-beta-linkages between N-acetylmuramic acid and N-acetyl-D-glucosamine residues in a peptidoglycan and between N-acetyl-D-glucosamine residues in chitodextrins.. Functionally, lysozymes have primarily a bacteriolytic function; those in tissues and body fluids are associated with the monocyte-macrophage system and enhance the activity of immunoagents. Lyz1 is active against a range of Gram-positive and Gram-negative bacteria. Less effective than Lyz2 in killing Gram-negative bacteria. Lyz1 and Lyz2 are equally effective in killing Gram-positive bacteria. In Mus musculus (Mouse), this protein is Lysozyme C-1 (Lyz1).